We begin with the raw amino-acid sequence, 463 residues long: Peptidase inhibitor 16 (463 aa).

Residues 1 to 27 (MHGSCSFLMLLLPLLLLLVATTGPVGA) form the signal peptide. One can recognise an SCP domain in the interval 37-165 (VELHNLYRAQ…TNIELLVCNY (129 aa)). Asn-114 carries an N-linked (GlcNAc...) asparagine glycan. Disordered regions lie at residues 262-281 (TQAPTSLATKDPPSMATEAP), 303-341 (EPVTFPKSTHVPIPKSADKVTDKTKVPSRSPENSLDPKM), and 383-408 (LQATLDHTGHTSSKSLPNFPNTSATA). Residues 318–327 (SADKVTDKTK) show a composition bias toward basic and acidic residues. The interval 386–395 (TLDHTGHTSS) is O-glycosylated at one site. Residues 392–408 (HTSSKSLPNFPNTSATA) are compositionally biased toward polar residues. N-linked (GlcNAc...) asparagine glycosylation is found at Asn-403 and Asn-409.

It belongs to the CRISP family. In terms of assembly, interacts with PSP94/MSMB. In terms of processing, N- and O-glycosylated. O-glycosylated with core 1 or possibly core 8 glycans. Expressed in prostate, testis, ovary and intestine. Concentrates in prostate cancer patient's sera.

The protein localises to the secreted. May inhibit cardiomyocyte growth. The protein is Peptidase inhibitor 16 (PI16) of Homo sapiens (Human).